The following is a 530-amino-acid chain: MSLQPLTAVNCGSLVQPGFSLLDLEGDVYLFGQKGWPKRSCPTGIFGVRIKKGELKLRAISFSNNSSYLPPLRCPAIAHFEAQDGKPECYLIHGGRTPNNELSSSLYMLSVDSRGCNRKVTLRCEEKELVGDVPSARYGHTLSVINSRGKTACVLFGGRSYMPPTERTTQNWNSVGDCPPQVYLIDLEFGCCTAHTLPELTDGQSFHVALARQDCVYFLGGHILSSDCRPSRLIRLHVELLLGSPVLTCTILHEGLTITSAIASPIGYHEYIIFGGYQSETQKRMECTYVGLDDVGVHMESREPPQWTSEISHSRTWFGGSLGKGTALVAIPSEGNPTPPEAYHFYQVSFQKEQDGEATAQGCSQESTDFEDSAPLEDSEELYFGREPHELEYSSDVEGDTYNEEDEEDESQTGYWIKCCLSCQVDPNIWEPYYSTELTRPAMIFCSRGEGGHWVHAQCMELPESLLLQLSQDNSKYFCLDHGGLPKQEMTPPKQMLPVKRVPMKMTHRKAPVSLKMTPAKKTFLRRLFD.

Residues 416 to 485 form a PHD-type; atypical zinc finger; the sequence is WIKCCLSCQV…KYFCLDHGGL (70 aa). Zn(2+)-binding residues include C419, C423, C446, H453, H456, C459, C479, and H482.

It belongs to the RAG2 family. In terms of assembly, component of the RAG complex composed of core components rag1 and rag2.

It is found in the nucleus. Functionally, core component of the RAG complex, a multiprotein complex that mediates the DNA cleavage phase during V(D)J recombination. V(D)J recombination assembles a diverse repertoire of immunoglobulin and T-cell receptor genes in developing B and T lymphocytes through rearrangement of different V (variable), in some cases D (diversity), and J (joining) gene segments. DNA cleavage by the RAG complex occurs in 2 steps: a first nick is introduced in the top strand immediately upstream of the heptamer, generating a 3'-hydroxyl group that can attack the phosphodiester bond on the opposite strand in a direct transesterification reaction, thereby creating 4 DNA ends: 2 hairpin coding ends and 2 blunt, 5'-phosphorylated ends. In the RAG complex, rag2 is not the catalytic component but is required for all known catalytic activities mediated by RAG1. It probably acts as a sensor of chromatin state that recruits the RAG complex to H3K4me3. This Danio rerio (Zebrafish) protein is V(D)J recombination-activating protein 2 (rag2).